A 462-amino-acid chain; its full sequence is ATP synthase subunit beta (462 aa).

152–159 (GGAGVGKT) is an ATP binding site.

The protein belongs to the ATPase alpha/beta chains family. In terms of assembly, F-type ATPases have 2 components, CF(1) - the catalytic core - and CF(0) - the membrane proton channel. CF(1) has five subunits: alpha(3), beta(3), gamma(1), delta(1), epsilon(1). CF(0) has three main subunits: a(1), b(2) and c(9-12). The alpha and beta chains form an alternating ring which encloses part of the gamma chain. CF(1) is attached to CF(0) by a central stalk formed by the gamma and epsilon chains, while a peripheral stalk is formed by the delta and b chains.

The protein resides in the cell inner membrane. It catalyses the reaction ATP + H2O + 4 H(+)(in) = ADP + phosphate + 5 H(+)(out). Its function is as follows. Produces ATP from ADP in the presence of a proton gradient across the membrane. The catalytic sites are hosted primarily by the beta subunits. This chain is ATP synthase subunit beta, found in Tolumonas auensis (strain DSM 9187 / NBRC 110442 / TA 4).